The primary structure comprises 290 residues: Nucleotide-binding protein Xfasm12_0753 (290 aa).

13–20 is a binding site for ATP; that stretch reads GLSGSGKS. 65 to 68 contacts GTP; it reads DIRS.

Belongs to the RapZ-like family.

Displays ATPase and GTPase activities. The protein is Nucleotide-binding protein Xfasm12_0753 of Xylella fastidiosa (strain M12).